The chain runs to 369 residues: Anhydro-N-acetylmuramic acid kinase (369 aa).

ATP is bound at residue 12–19 (GTSMDGVD).

The protein belongs to the anhydro-N-acetylmuramic acid kinase family.

The catalysed reaction is 1,6-anhydro-N-acetyl-beta-muramate + ATP + H2O = N-acetyl-D-muramate 6-phosphate + ADP + H(+). It participates in amino-sugar metabolism; 1,6-anhydro-N-acetylmuramate degradation. It functions in the pathway cell wall biogenesis; peptidoglycan recycling. In terms of biological role, catalyzes the specific phosphorylation of 1,6-anhydro-N-acetylmuramic acid (anhMurNAc) with the simultaneous cleavage of the 1,6-anhydro ring, generating MurNAc-6-P. Is required for the utilization of anhMurNAc either imported from the medium or derived from its own cell wall murein, and thus plays a role in cell wall recycling. The chain is Anhydro-N-acetylmuramic acid kinase from Shewanella woodyi (strain ATCC 51908 / MS32).